A 153-amino-acid polypeptide reads, in one-letter code: Protein-export protein SecB (153 aa).

It belongs to the SecB family. In terms of assembly, homotetramer, a dimer of dimers. One homotetramer interacts with 1 SecA dimer.

It is found in the cytoplasm. In terms of biological role, one of the proteins required for the normal export of preproteins out of the cell cytoplasm. It is a molecular chaperone that binds to a subset of precursor proteins, maintaining them in a translocation-competent state. It also specifically binds to its receptor SecA. The chain is Protein-export protein SecB from Edwardsiella ictaluri (strain 93-146).